Reading from the N-terminus, the 395-residue chain is Putative nickel insertion protein (395 aa).

The protein belongs to the LarC family.

In Roseiflexus castenholzii (strain DSM 13941 / HLO8), this protein is Putative nickel insertion protein.